The sequence spans 152 residues: Calmodulin-like protein 2 (152 aa).

EF-hand domains follow at residues 1–36 (MDRGELSRVFQMFDKNGDGKIAKNELKDFFKSVGIM), 37–72 (VPENEINEMIAKMDVNGDGAMDIDEFGSLYQEMVEE), 74–109 (EEEEDMREAFRVFDQNGDGFITDEELRSVLASMGLK), and 112–147 (RTLEDCKKMISKVDVDGDGMVNFKEFKQMMRGGGFA). Ca(2+) contacts are provided by Asp14, Asn16, Asp18, Lys20, Glu25, Asp50, Asn52, Asp54, Glu61, Asp87, Asn89, Asp91, Glu98, Asp125, Asp127, Asp129, Met131, and Glu136.

The protein belongs to the calmodulin family.

Functionally, potential calcium sensor that is required for pollen tube attraction for ovule fertilization. In Arabidopsis thaliana (Mouse-ear cress), this protein is Calmodulin-like protein 2 (CML2).